Here is a 1078-residue protein sequence, read N- to C-terminus: Isoleucine--tRNA ligase (1078 aa).

The 'HIGH' region signature appears at 52-62 (PTANGKPALHH). The short motif at 637 to 641 (KMSKS) is the 'KMSKS' region element. ATP is bound at residue lysine 640.

This sequence belongs to the class-I aminoacyl-tRNA synthetase family. IleS type 2 subfamily. Monomer. Zn(2+) serves as cofactor.

Its subcellular location is the cytoplasm. The enzyme catalyses tRNA(Ile) + L-isoleucine + ATP = L-isoleucyl-tRNA(Ile) + AMP + diphosphate. Its function is as follows. Catalyzes the attachment of isoleucine to tRNA(Ile). As IleRS can inadvertently accommodate and process structurally similar amino acids such as valine, to avoid such errors it has two additional distinct tRNA(Ile)-dependent editing activities. One activity is designated as 'pretransfer' editing and involves the hydrolysis of activated Val-AMP. The other activity is designated 'posttransfer' editing and involves deacylation of mischarged Val-tRNA(Ile). The protein is Isoleucine--tRNA ligase of Deinococcus radiodurans (strain ATCC 13939 / DSM 20539 / JCM 16871 / CCUG 27074 / LMG 4051 / NBRC 15346 / NCIMB 9279 / VKM B-1422 / R1).